The sequence spans 1051 residues: Carbamoyl phosphate synthase large chain (1051 aa).

The segment at 1–399 (MKETPKKVLV…SLQKAVRMLD (399 aa)) is carboxyphosphate synthetic domain. ATP contacts are provided by R127, R167, G173, G174, K206, L208, E213, G239, V240, H241, Q282, and E296. One can recognise an ATP-grasp 1 domain in the interval 131–325 (RETMIENNLP…LAYVSAKLAL (195 aa)). The Mg(2+) site is built by Q282, E296, and N298. 3 residues coordinate Mn(2+): Q282, E296, and N298. The interval 400–548 (IGEPGVVGGK…LTYNGTEDDL (149 aa)) is oligomerization domain. The segment at 549–930 (EFSQGNKLLM…LKSWLSSIPN (382 aa)) is carbamoyl phosphate synthetic domain. The ATP-grasp 2 domain occupies 673–863 (SKLLDKLGIS…LINESMKAIF (191 aa)). ATP-binding residues include R709, K748, I750, E755, G779, V780, H781, S782, Q822, and E834. The Mg(2+) site is built by Q822, E834, and N836. Mn(2+) contacts are provided by Q822, E834, and N836. The MGS-like domain occupies 930 to 1051 (NRIPNKNGIA…FEISEYGGGI (122 aa)). Positions 931–1051 (RIPNKNGIAL…FEISEYGGGI (121 aa)) are allosteric domain.

It belongs to the CarB family. As to quaternary structure, composed of two chains; the small (or glutamine) chain promotes the hydrolysis of glutamine to ammonia, which is used by the large (or ammonia) chain to synthesize carbamoyl phosphate. Tetramer of heterodimers (alpha,beta)4. Mg(2+) serves as cofactor. It depends on Mn(2+) as a cofactor.

It carries out the reaction hydrogencarbonate + L-glutamine + 2 ATP + H2O = carbamoyl phosphate + L-glutamate + 2 ADP + phosphate + 2 H(+). It catalyses the reaction hydrogencarbonate + NH4(+) + 2 ATP = carbamoyl phosphate + 2 ADP + phosphate + 2 H(+). Its pathway is amino-acid biosynthesis; L-arginine biosynthesis; carbamoyl phosphate from bicarbonate: step 1/1. It participates in pyrimidine metabolism; UMP biosynthesis via de novo pathway; (S)-dihydroorotate from bicarbonate: step 1/3. In terms of biological role, large subunit of the glutamine-dependent carbamoyl phosphate synthetase (CPSase). CPSase catalyzes the formation of carbamoyl phosphate from the ammonia moiety of glutamine, carbonate, and phosphate donated by ATP, constituting the first step of 2 biosynthetic pathways, one leading to arginine and/or urea and the other to pyrimidine nucleotides. The large subunit (synthetase) binds the substrates ammonia (free or transferred from glutamine from the small subunit), hydrogencarbonate and ATP and carries out an ATP-coupled ligase reaction, activating hydrogencarbonate by forming carboxy phosphate which reacts with ammonia to form carbamoyl phosphate. The polypeptide is Carbamoyl phosphate synthase large chain (Saccharolobus islandicus (strain M.16.4 / Kamchatka #3) (Sulfolobus islandicus)).